Here is a 1437-residue protein sequence, read N- to C-terminus: Gag-Pol polyprotein (1437 aa).

Glycine 2 carries N-myristoyl glycine; by host lipidation. The interaction with Gp41 stretch occupies residues 7–31 (VLSGGELDKWEKIRLRPGGKKKYKL). Residues 8 to 43 (LSGGELDKWEKIRLRPGGKKKYKLKHIVWASRELER) are interaction with host CALM1. An interaction with host AP3D1 region spans residues 12 to 19 (ELDKWEKI). The interaction with membrane phosphatidylinositol 4,5-bisphosphate and RNA stretch occupies residues 14-33 (DKWEKIRLRPGGKKKYKLKH). Positions 16 to 22 (WEKIRLR) match the Nuclear export signal motif. Positions 26 to 32 (KKKYKLK) match the Nuclear localization signal motif. The interaction with membrane phosphatidylinositol 4,5-bisphosphate stretch occupies residues 73–77 (EELRS). The segment at 106–129 (EEQNKSKKKAQQAAAAAGTGNSSQ) is disordered. Tyrosine 134 carries the post-translational modification Phosphotyrosine; by host. The tract at residues 191–229 (NTVGGHQAAMQMLKETINEEAAEWDRVHPVHAGPIAPGQ) is interaction with human PPIA/CYPA and NUP153. Positions 279-365 (YSPTSILDIR…GGPGHKARVL (87 aa)) are dimerization/Multimerization of capsid protein p24. CCHC-type zinc fingers lie at residues 392-409 (VKCF…NCRA) and 413-430 (KGCW…DCTE). The segment at 491 to 495 (PQITL) is dimerization of protease. A Peptidase A2 domain is found at 510–579 (KEALLDTGAD…TPVNIIGRNL (70 aa)). Aspartate 515 functions as the For protease activity; shared with dimeric partner in the catalytic mechanism. 2 dimerization of protease regions span residues 539–545 (GIGGFIK) and 578–590 (NLLT…LNFP). The Reverse transcriptase domain occupies 633-823 (EGKISKIGPE…PPFLWMGYEL (191 aa)). Mg(2+)-binding residues include aspartate 699, aspartate 774, and aspartate 775. Positions 816 to 824 (FLWMGYELH) are RT 'primer grip'. The Tryptophan repeat motif motif lies at 987–1003 (WEAWWMEYWQATWIPEW). Residues 1023–1146 (IVGAETFYVD…VDKLVSAGIR (124 aa)) form the RNase H type-1 domain. Aspartate 1032, glutamate 1067, aspartate 1087, and aspartate 1138 together coordinate Mg(2+). The segment at 1152 to 1193 (NGIDKAQEEHEKYHSNWRAMASDFNLPPVVAKEIVASCDKCQ) adopts an Integrase-type zinc-finger fold. Positions 1161, 1165, 1189, and 1192 each coordinate Zn(2+). The 151-residue stretch at 1203 to 1353 (VDCSPGIWQL…SAGERIVDII (151 aa)) folds into the Integrase catalytic domain. Mg(2+) contacts are provided by aspartate 1213, aspartate 1265, and glutamate 1301. The segment at residues 1372–1419 (FRVYYRDNKDPLWKGPAKLLWKGEGAVVIQDNSDIKVVPRRKAKIIRD) is a DNA-binding region (integrase-type).

Homotrimer; further assembles as hexamers of trimers. Interacts with gp41 (via C-terminus). Interacts with host CALM1; this interaction induces a conformational change in the Matrix protein, triggering exposure of the myristate group. Interacts with host AP3D1; this interaction allows the polyprotein trafficking to multivesicular bodies during virus assembly. Part of the pre-integration complex (PIC) which is composed of viral genome, matrix protein, Vpr and integrase. In terms of assembly, homodimer; the homodimer further multimerizes as homohexamers or homopentamers. Interacts with human PPIA/CYPA; This interaction stabilizes the capsid. Interacts with human NUP153. Interacts with host PDZD8; this interaction stabilizes the capsid. Interacts with monkey TRIM5; this interaction destabilizes the capsid. As to quaternary structure, homodimer, whose active site consists of two apposed aspartic acid residues. Heterodimer of p66 RT and p51 RT (RT p66/p51). Heterodimerization of RT is essential for DNA polymerase activity. The overall folding of the subdomains is similar in p66 RT and p51 RT but the spatial arrangements of the subdomains are dramatically different. In terms of assembly, homotetramer; may further associate as a homohexadecamer. Part of the pre-integration complex (PIC) which is composed of viral genome, matrix protein, Vpr and integrase. Interacts with human SMARCB1/INI1 and human PSIP1/LEDGF isoform 1. Interacts with human KPNA3; this interaction might play a role in nuclear import of the pre-integration complex. Interacts with human NUP153; this interaction might play a role in nuclear import of the pre-integration complex. The cofactor is Mg(2+). In terms of processing, specific enzymatic cleavages by the viral protease yield mature proteins. The protease is released by autocatalytic cleavage. The polyprotein is cleaved during and after budding, this process is termed maturation. Proteolytic cleavage of p66 RT removes the RNase H domain to yield the p51 RT subunit. Nucleocapsid protein p7 might be further cleaved after virus entry. Post-translationally, tyrosine phosphorylated presumably in the virion by a host kinase. Phosphorylation is apparently not a major regulator of membrane association. Phosphorylated possibly by host MAPK1; this phosphorylation is necessary for Pin1-mediated virion uncoating. In terms of processing, methylated by host PRMT6, impairing its function by reducing RNA annealing and the initiation of reverse transcription.

Its subcellular location is the host cell membrane. The protein resides in the host endosome. The protein localises to the host multivesicular body. It is found in the virion membrane. It localises to the host nucleus. Its subcellular location is the host cytoplasm. The protein resides in the virion. The enzyme catalyses Specific for a P1 residue that is hydrophobic, and P1' variable, but often Pro.. The catalysed reaction is Endohydrolysis of RNA in RNA/DNA hybrids. Three different cleavage modes: 1. sequence-specific internal cleavage of RNA. Human immunodeficiency virus type 1 and Moloney murine leukemia virus enzymes prefer to cleave the RNA strand one nucleotide away from the RNA-DNA junction. 2. RNA 5'-end directed cleavage 13-19 nucleotides from the RNA end. 3. DNA 3'-end directed cleavage 15-20 nucleotides away from the primer terminus.. It catalyses the reaction 3'-end directed exonucleolytic cleavage of viral RNA-DNA hybrid.. It carries out the reaction DNA(n) + a 2'-deoxyribonucleoside 5'-triphosphate = DNA(n+1) + diphosphate. Protease: The viral protease is inhibited by many synthetic protease inhibitors (PIs), such as amprenavir, atazanavir, indinavir, loprinavir, nelfinavir, ritonavir and saquinavir. Use of protease inhibitors in tritherapy regimens permit more ambitious therapeutic strategies. Reverse transcriptase/ribonuclease H: RT can be inhibited either by nucleoside RT inhibitors (NRTIs) or by non nucleoside RT inhibitors (NNRTIs). NRTIs act as chain terminators, whereas NNRTIs inhibit DNA polymerization by binding a small hydrophobic pocket near the RT active site and inducing an allosteric change in this region. Classical NRTIs are abacavir, adefovir (PMEA), didanosine (ddI), lamivudine (3TC), stavudine (d4T), tenofovir (PMPA), zalcitabine (ddC), and zidovudine (AZT). Classical NNRTIs are atevirdine (BHAP U-87201E), delavirdine, efavirenz (DMP-266), emivirine (I-EBU), and nevirapine (BI-RG-587). The tritherapies used as a basic effective treatment of AIDS associate two NRTIs and one NNRTI. Mediates, with Gag polyprotein, the essential events in virion assembly, including binding the plasma membrane, making the protein-protein interactions necessary to create spherical particles, recruiting the viral Env proteins, and packaging the genomic RNA via direct interactions with the RNA packaging sequence (Psi). Gag-Pol polyprotein may regulate its own translation, by the binding genomic RNA in the 5'-UTR. At low concentration, the polyprotein would promote translation, whereas at high concentration, the polyprotein would encapsidate genomic RNA and then shut off translation. Functionally, targets the polyprotein to the plasma membrane via a multipartite membrane-binding signal, that includes its myristoylated N-terminus. Matrix protein is part of the pre-integration complex. Implicated in the release from host cell mediated by Vpu. Binds to RNA. In terms of biological role, forms the conical core that encapsulates the genomic RNA-nucleocapsid complex in the virion. Most core are conical, with only 7% tubular. The core is constituted by capsid protein hexamer subunits. The core is disassembled soon after virion entry. Host restriction factors such as TRIM5-alpha or TRIMCyp bind retroviral capsids and cause premature capsid disassembly, leading to blocks in reverse transcription. Capsid restriction by TRIM5 is one of the factors which restricts HIV-1 to the human species. Host PIN1 apparently facilitates the virion uncoating. On the other hand, interactions with PDZD8 or CYPA stabilize the capsid. Its function is as follows. Encapsulates and protects viral dimeric unspliced genomic RNA (gRNA). Binds these RNAs through its zinc fingers. Acts as a nucleic acid chaperone which is involved in rearangement of nucleic acid secondary structure during gRNA retrotranscription. Also facilitates template switch leading to recombination. As part of the polyprotein, participates in gRNA dimerization, packaging, tRNA incorporation and virion assembly. Aspartyl protease that mediates proteolytic cleavages of Gag and Gag-Pol polyproteins during or shortly after the release of the virion from the plasma membrane. Cleavages take place as an ordered, step-wise cascade to yield mature proteins. This process is called maturation. Displays maximal activity during the budding process just prior to particle release from the cell. Also cleaves Nef and Vif, probably concomitantly with viral structural proteins on maturation of virus particles. Hydrolyzes host EIF4GI and PABP1 in order to shut off the capped cellular mRNA translation. The resulting inhibition of cellular protein synthesis serves to ensure maximal viral gene expression and to evade host immune response. Also mediates cleavage of host YTHDF3. Mediates cleavage of host CARD8, thereby activating the CARD8 inflammasome, leading to the clearance of latent HIV-1 in patient CD4(+) T-cells after viral reactivation; in contrast, HIV-1 can evade CARD8-sensing when its protease remains inactive in infected cells prior to viral budding. Functionally, multifunctional enzyme that converts the viral RNA genome into dsDNA in the cytoplasm, shortly after virus entry into the cell. This enzyme displays a DNA polymerase activity that can copy either DNA or RNA templates, and a ribonuclease H (RNase H) activity that cleaves the RNA strand of RNA-DNA heteroduplexes in a partially processive 3' to 5' endonucleasic mode. Conversion of viral genomic RNA into dsDNA requires many steps. A tRNA(3)-Lys binds to the primer-binding site (PBS) situated at the 5'-end of the viral RNA. RT uses the 3' end of the tRNA primer to perform a short round of RNA-dependent minus-strand DNA synthesis. The reading proceeds through the U5 region and ends after the repeated (R) region which is present at both ends of viral RNA. The portion of the RNA-DNA heteroduplex is digested by the RNase H, resulting in a ssDNA product attached to the tRNA primer. This ssDNA/tRNA hybridizes with the identical R region situated at the 3' end of viral RNA. This template exchange, known as minus-strand DNA strong stop transfer, can be either intra- or intermolecular. RT uses the 3' end of this newly synthesized short ssDNA to perform the RNA-dependent minus-strand DNA synthesis of the whole template. RNase H digests the RNA template except for two polypurine tracts (PPTs) situated at the 5'-end and near the center of the genome. It is not clear if both polymerase and RNase H activities are simultaneous. RNase H probably can proceed both in a polymerase-dependent (RNA cut into small fragments by the same RT performing DNA synthesis) and a polymerase-independent mode (cleavage of remaining RNA fragments by free RTs). Secondly, RT performs DNA-directed plus-strand DNA synthesis using the PPTs that have not been removed by RNase H as primers. PPTs and tRNA primers are then removed by RNase H. The 3' and 5' ssDNA PBS regions hybridize to form a circular dsDNA intermediate. Strand displacement synthesis by RT to the PBS and PPT ends produces a blunt ended, linear dsDNA copy of the viral genome that includes long terminal repeats (LTRs) at both ends. In terms of biological role, catalyzes viral DNA integration into the host chromosome, by performing a series of DNA cutting and joining reactions. This enzyme activity takes place after virion entry into a cell and reverse transcription of the RNA genome in dsDNA. The first step in the integration process is 3' processing. This step requires a complex comprising the viral genome, matrix protein, Vpr and integrase. This complex is called the pre-integration complex (PIC). The integrase protein removes 2 nucleotides from each 3' end of the viral DNA, leaving recessed CA OH's at the 3' ends. In the second step, the PIC enters cell nucleus. This process is mediated through integrase and Vpr proteins, and allows the virus to infect a non dividing cell. This ability to enter the nucleus is specific of lentiviruses, other retroviruses cannot and rely on cell division to access cell chromosomes. In the third step, termed strand transfer, the integrase protein joins the previously processed 3' ends to the 5' ends of strands of target cellular DNA at the site of integration. The 5'-ends are produced by integrase-catalyzed staggered cuts, 5 bp apart. A Y-shaped, gapped, recombination intermediate results, with the 5'-ends of the viral DNA strands and the 3' ends of target DNA strands remaining unjoined, flanking a gap of 5 bp. The last step is viral DNA integration into host chromosome. This involves host DNA repair synthesis in which the 5 bp gaps between the unjoined strands are filled in and then ligated. Since this process occurs at both cuts flanking the HIV genome, a 5 bp duplication of host DNA is produced at the ends of HIV-1 integration. Alternatively, Integrase may catalyze the excision of viral DNA just after strand transfer, this is termed disintegration. The sequence is that of Gag-Pol polyprotein (gag-pol) from Human immunodeficiency virus type 1 group M subtype B (isolate ARV2/SF2) (HIV-1).